The following is a 339-amino-acid chain: Dipeptide transport system permease protein DppB (339 aa).

Residues 1-9 (MLQFILRRL) lie on the Periplasmic side of the membrane. A helical transmembrane segment spans residues 10–30 (GLVIPTFIGITLLTFAFVHMI). Over 31–102 (PGDPVMIMAG…VPRFQATLEL (72 aa)) the chain is Cytoplasmic. In terms of domain architecture, ABC transmembrane type-1 spans 96–328 (FQATLELGVC…LVNLLVDLLY (233 aa)). A helical membrane pass occupies residues 103–123 (GVCAMIFATAVGIPVGVLAAV). Topologically, residues 124 to 135 (KRGSIFDHTAVG) are periplasmic. Residues 136–156 (LALTGYSMPIFWWGMMLIMLV) traverse the membrane as a helical segment. Residues 157-171 (SVHWNLTPVSGRVSD) are Cytoplasmic-facing. Residues 172-192 (MVFLDDSNPLTGFMLIDTAIW) traverse the membrane as a helical segment. The Periplasmic segment spans residues 193–200 (GEDGNFID). Residues 201 to 221 (AVAHMILPAIVLGTIPLAVIV) traverse the membrane as a helical segment. Residues 222-259 (RMTRSSMLEVLGEDYIRTARAKGLTRMRVIIVHALRNA) are Cytoplasmic-facing. A helical transmembrane segment spans residues 260–280 (MLPVVTVIGLQVGTLLAGAIL). Residues 281–309 (TETIFSWPGLGRWLIDALQRRDYPVVQGG) are Periplasmic-facing. Residues 310 to 330 (VLLVATMIILVNLLVDLLYGV) traverse the membrane as a helical segment. Residues 331–339 (VNPRIRHKK) lie on the Cytoplasmic side of the membrane.

It belongs to the binding-protein-dependent transport system permease family. OppBC subfamily. As to quaternary structure, the complex is composed of two ATP-binding proteins (DppD and DppF), two transmembrane proteins (DppB and DppC) and a solute-binding protein (DppA).

It localises to the cell inner membrane. Part of the ABC transporter DppABCDF involved in dipeptide transport. Responsible for the translocation of the substrate across the membrane. The chain is Dipeptide transport system permease protein DppB (dppB) from Escherichia coli O157:H7.